Reading from the N-terminus, the 446-residue chain is Questin oxidase (446 aa).

It belongs to the questin oxidase family.

The enzyme catalyses questin + NADPH + O2 = demethylsulochrin + NADP(+). It functions in the pathway secondary metabolite biosynthesis. Its function is as follows. Questin oxidase; part of the gene cluster that mediates the biosynthesis of geodin, an intermediate in the biosynthesis of other natural products. The pathway begins with the synthesis of atrochrysone thioester by the polyketide synthase (PKS) gedC. The atrochrysone carboxyl ACP thioesterase gedB then breaks the thioester bond and releases the atrochrysone carboxylic acid from gedC. The atrochrysone carboxylic acid is then converted to atrochrysone which is further transformed into emodinanthrone. The next step is performed by the emodinanthrone oxygenase gedH that catalyzes the oxidation of emodinanthrone to emodin. Emodin O-methyltransferase encoded probably by gedA then catalyzes methylation of the 8-hydroxy group of emodin to form questin. Ring cleavage of questin by questin oxidase gedK leads to desmethylsulochrin via several intermediates including questin epoxide. Another methylation step probably catalyzed by methyltransferase gedG leads to the formation of sulochrin which is further converted to dihydrogeodin by the sulochrin halogenase gedL. Finally, the dihydrogeodin oxidase gedJ catalyzes the stereospecific phenol oxidative coupling reaction converting dihydrogeodin to geodin. This Aspergillus terreus (strain NIH 2624 / FGSC A1156) protein is Questin oxidase.